The sequence spans 251 residues: Coproheme decarboxylase (251 aa).

Residues Arg-133, 147-151, His-174, Gln-187, and Ser-225 each bind Fe-coproporphyrin III; that span reads YPMSK. Tyr-147 is a catalytic residue.

Belongs to the ChdC family. Type 1 subfamily. The cofactor is Fe-coproporphyrin III.

The catalysed reaction is Fe-coproporphyrin III + 2 H2O2 + 2 H(+) = heme b + 2 CO2 + 4 H2O. It catalyses the reaction Fe-coproporphyrin III + H2O2 + H(+) = harderoheme III + CO2 + 2 H2O. The enzyme catalyses harderoheme III + H2O2 + H(+) = heme b + CO2 + 2 H2O. Its pathway is porphyrin-containing compound metabolism; protoheme biosynthesis. In terms of biological role, involved in coproporphyrin-dependent heme b biosynthesis. Catalyzes the decarboxylation of Fe-coproporphyrin III (coproheme) to heme b (protoheme IX), the last step of the pathway. The reaction occurs in a stepwise manner with a three-propionate intermediate. The protein is Coproheme decarboxylase of Listeria monocytogenes serotype 4a (strain HCC23).